Reading from the N-terminus, the 153-residue chain is Transcriptional repressor NrdR (153 aa).

A zinc finger lies at 3-34; it reads CPFCNSTDTQVKDSRSIENDMLIRRRRVCLVC. The ATP-cone domain occupies 49–139; sequence FMVVKKNGET…VYMNFRNIND (91 aa).

This sequence belongs to the NrdR family. Zn(2+) is required as a cofactor.

Negatively regulates transcription of bacterial ribonucleotide reductase nrd genes and operons by binding to NrdR-boxes. The protein is Transcriptional repressor NrdR of Ehrlichia chaffeensis (strain ATCC CRL-10679 / Arkansas).